We begin with the raw amino-acid sequence, 415 residues long: NEDD8-specific protease 2 (415 aa).

The tract at residues 1 to 42 (MRSNSIFTKEIDSEAVKKSSNLRPPSTGSSNSNGSDTASPKK) is disordered. A compositionally biased stretch (low complexity) spans 26-38 (STGSSNSNGSDTA). Ser-35 is subject to Phosphoserine. Residues His-171, Asp-188, and Cys-229 contribute to the active site. A disordered region spans residues 320-415 (AVTSDSAQPH…QHTQQSIEIH (96 aa)). Polar residues-rich tracts occupy residues 335 to 368 (MPSS…NSSP), 379 to 390 (TASTSVLPTSIL), and 405 to 415 (IQHTQQSIEIH). Position 367 is a phosphoserine (Ser-367).

Belongs to the peptidase C48 family.

Its subcellular location is the cytoplasm. It is found in the nucleus. In terms of biological role, protease that catalyzes two essential functions in the NEDD8 pathway: processing of full-length NEDD8 to its mature form and deconjugation of NEDD8 from targeted proteins such as the pcu1, pcu2 and pcu4 cullins and other proteins. Has a role in meiosis. This chain is NEDD8-specific protease 2 (nep2), found in Schizosaccharomyces pombe (strain 972 / ATCC 24843) (Fission yeast).